The primary structure comprises 149 residues: Protein SprT-like (149 aa).

Residues 6–147 (LQKLTEDISL…CGKCRGKIKR (142 aa)) enclose the SprT-like domain. Position 67 (H67) interacts with Zn(2+). E68 is a catalytic residue. A Zn(2+)-binding site is contributed by H71.

The protein belongs to the SprT family. Zn(2+) serves as cofactor.

Its subcellular location is the cytoplasm. The chain is Protein SprT-like from Bacillus velezensis (strain DSM 23117 / BGSC 10A6 / LMG 26770 / FZB42) (Bacillus amyloliquefaciens subsp. plantarum).